Reading from the N-terminus, the 220-residue chain is MIQVSKVIPQGAGLAPVLVKRASTVELDWDVRQKSRFDATDSLGRTLGVFLPRGTLVRGGDVLVAEDGSMIKVIASPQPVLRITACSAHGSPFDLTRAAYHLGNRHVPIELKPDHLKIEPDHVLADMLRAMHLIVHEVEEAFEPEGGAYSAGGHGHGHDHGSHEHSAHDHGKHDHAPAKPATAATPAAHVHGPDCNHGHDHAHEAKPATIQIHKRRPDNL.

Residues 145–220 (EGGAYSAGGH…QIHKRRPDNL (76 aa)) form a disordered region. The segment covering 156–177 (HGHDHGSHEHSAHDHGKHDHAP) has biased composition (basic and acidic residues). Over residues 178–188 (AKPATAATPAA) the composition is skewed to low complexity. Residues 191-206 (HGPDCNHGHDHAHEAK) show a composition bias toward basic and acidic residues.

This sequence belongs to the UreE family.

It localises to the cytoplasm. Its function is as follows. Involved in urease metallocenter assembly. Binds nickel. Probably functions as a nickel donor during metallocenter assembly. This is Urease accessory protein UreE from Polaromonas sp. (strain JS666 / ATCC BAA-500).